We begin with the raw amino-acid sequence, 1356 residues long: Transmembrane protein 94 (1356 aa).

Topologically, residues 1–64 (MDLKEKHLGE…FLHHSNRCSC (64 aa)) are cytoplasmic. The chain crosses the membrane as a helical span at residues 65-85 (FHWPGASLMLLAVLLLLGCCG). Residues 86 to 92 (GQPAGSR) are Lumenal-facing. A helical transmembrane segment spans residues 93-113 (GVGLVNASALFLLLLLNLVLI). Residues 114–273 (GRQDRLKRRE…RPVTALDNER (160 aa)) lie on the Cytoplasmic side of the membrane. 2 positions are modified to phosphoserine: Ser-221 and Ser-225. Residues 274–294 (FTVQSVMLHYAVPVVLAGFLI) traverse the membrane as a helical segment. Over 295–320 (TNALRFIFSAPGVTSWQYTLLQLQVN) the chain is Lumenal. The chain crosses the membrane as a helical span at residues 321-341 (GVLPILPLLFPVLWVLATACG). The Cytoplasmic segment spans residues 342 to 1092 (EARVLAQMSK…RHATYGIRKC (751 aa)). The DKQGIL signature appears at 417 to 422 (DKQGIL). Disordered regions lie at residues 439 to 461 (VEPP…FCHP) and 483 to 541 (EQER…ESDP). Basic and acidic residues predominate over residues 440–449 (EPPHSSHEDL). 3 positions are modified to phosphoserine: Ser-444, Ser-445, and Ser-454. Over residues 502 to 511 (HHKAHGRSKH) the composition is skewed to basic residues. Phosphoserine is present on residues Ser-513, Ser-518, Ser-798, and Ser-941. The chain crosses the membrane as a helical span at residues 1093–1113 (FLFLLQCQLTLVVIQFLSCLV). At 1114-1120 (QLPPLLS) the chain is on the lumenal side. The chain crosses the membrane as a helical span at residues 1121 to 1141 (TTDILWLSCFCYPLLSISLLG). The Cytoplasmic segment spans residues 1142-1167 (KPPHSSIMSMATGKNLQSIPKKTQHY). The chain crosses the membrane as a helical span at residues 1168–1188 (FLLCFLLKFSLTISSCLICFG). Residues 1189-1228 (FTLQSFCDSSRDRNLTNCSSVMLPSNDDRAPAWFEDFANG) are Lumenal-facing. Residues Asn-1202 and Asn-1205 are each glycosylated (N-linked (GlcNAc...) asparagine). The helical transmembrane segment at 1229 to 1249 (LLSAQKLTAALIVLHTVFISI) threads the bilayer. Residues 1250–1261 (THVHRTKPLWRK) lie on the Cytoplasmic side of the membrane. A helical membrane pass occupies residues 1262–1282 (SPLTNLWWAVTVPVVLLGQVV). Topologically, residues 1283–1306 (QTAVDLQLWTHRDSHVHFGLEDVP) are lumenal. A helical membrane pass occupies residues 1307 to 1327 (LLTWLLGCLSLVLVVVTNEIV). Residues 1328–1356 (KLHEIRVRVRYQKRQKLQFETKLGMNSPF) lie on the Cytoplasmic side of the membrane. The GMN; metal-binding motif motif lies at 1351 to 1353 (GMN).

Forms homooligomers. Expressed ubiquitously.

It is found in the endoplasmic reticulum membrane. Functionally, could function in the uptake of Mg(2+) from the cytosol into the endoplasmic reticulum and regulate intracellular Mg(2+) homeostasis. The protein is Transmembrane protein 94 of Homo sapiens (Human).